Reading from the N-terminus, the 742-residue chain is Cullin-2 (742 aa).

Residues 672 to 734 enclose the Cullin neddylation domain; that stretch reads DRRYAIDAAL…RDYLERDTDN (63 aa). Residue lysine 686 forms a Glycyl lysine isopeptide (Lys-Gly) (interchain with G-Cter in NEDD8) linkage.

It belongs to the cullin family. In terms of assembly, interacts with SKIP17 and FBW2/SKIP18. In terms of processing, neddylated; which enhances the ubiquitination activity of E3 ubiquitin-protein ligase complexes.

Core component of multiple SCF (SKP1-CUL1-F-box protein) E3 ubiquitin-protein ligase complexes. Involved in ubiquitination and subsequent proteasomal degradation of target proteins. In Arabidopsis thaliana (Mouse-ear cress), this protein is Cullin-2 (CUL2).